A 428-amino-acid chain; its full sequence is Glutamate-1-semialdehyde 2,1-aminomutase (428 aa).

Residue Lys267 is modified to N6-(pyridoxal phosphate)lysine.

The protein belongs to the class-III pyridoxal-phosphate-dependent aminotransferase family. HemL subfamily. In terms of assembly, homodimer. It depends on pyridoxal 5'-phosphate as a cofactor.

The protein resides in the cytoplasm. It catalyses the reaction (S)-4-amino-5-oxopentanoate = 5-aminolevulinate. It functions in the pathway porphyrin-containing compound metabolism; protoporphyrin-IX biosynthesis; 5-aminolevulinate from L-glutamyl-tRNA(Glu): step 2/2. Its pathway is porphyrin-containing compound metabolism; chlorophyll biosynthesis. The sequence is that of Glutamate-1-semialdehyde 2,1-aminomutase from Prochlorococcus marinus (strain MIT 9313).